The following is a 363-amino-acid chain: NADH-quinone oxidoreductase subunit H (363 aa).

The next 10 membrane-spanning stretches (helical) occupy residues 29-49 (VLKI…YVVW), 62-82 (GPMY…KLLF), 96-116 (FIIA…VVPF), 127-147 (VGLL…ILAG), 163-183 (AAQV…VMIA), 202-222 (FFDW…VSGV), 238-257 (EIVA…LFFL), 264-286 (ILVS…QGWV), 299-319 (KGGW…YIWF), and 339-359 (FIPL…YGVI).

Belongs to the complex I subunit 1 family. As to quaternary structure, NDH-1 is composed of 14 different subunits. Subunits NuoA, H, J, K, L, M, N constitute the membrane sector of the complex.

The protein localises to the cell inner membrane. The enzyme catalyses a quinone + NADH + 5 H(+)(in) = a quinol + NAD(+) + 4 H(+)(out). In terms of biological role, NDH-1 shuttles electrons from NADH, via FMN and iron-sulfur (Fe-S) centers, to quinones in the respiratory chain. The immediate electron acceptor for the enzyme in this species is believed to be ubiquinone. Couples the redox reaction to proton translocation (for every two electrons transferred, four hydrogen ions are translocated across the cytoplasmic membrane), and thus conserves the redox energy in a proton gradient. This subunit may bind ubiquinone. This Xanthomonas oryzae pv. oryzae (strain PXO99A) protein is NADH-quinone oxidoreductase subunit H.